Reading from the N-terminus, the 626-residue chain is Elongation factor 4 (626 aa).

In terms of domain architecture, tr-type G spans 14 to 195 (SVIRNFCIIA…QIVMDVPAPH (182 aa)). GTP-binding positions include 26 to 31 (DHGKST) and 142 to 145 (NKID). Residues 603–626 (LSTGEDSNDRDTKDKIRAAQKTEG) form a disordered region. Basic and acidic residues predominate over residues 609 to 626 (SNDRDTKDKIRAAQKTEG).

This sequence belongs to the TRAFAC class translation factor GTPase superfamily. Classic translation factor GTPase family. LepA subfamily.

The protein resides in the cell membrane. The enzyme catalyses GTP + H2O = GDP + phosphate + H(+). Functionally, required for accurate and efficient protein synthesis under certain stress conditions. May act as a fidelity factor of the translation reaction, by catalyzing a one-codon backward translocation of tRNAs on improperly translocated ribosomes. Back-translocation proceeds from a post-translocation (POST) complex to a pre-translocation (PRE) complex, thus giving elongation factor G a second chance to translocate the tRNAs correctly. Binds to ribosomes in a GTP-dependent manner. The polypeptide is Elongation factor 4 (Bifidobacterium longum (strain DJO10A)).